A 47-amino-acid chain; its full sequence is Large ribosomal subunit protein eL40 (47 aa).

The protein belongs to the eukaryotic ribosomal protein eL40 family.

The sequence is that of Large ribosomal subunit protein eL40 from Methanococcus aeolicus (strain ATCC BAA-1280 / DSM 17508 / OCM 812 / Nankai-3).